The sequence spans 1843 residues: Xin actin-binding repeat-containing protein 1 (1843 aa).

Residues 1–10 (MADTQTQVAP) are compositionally biased toward polar residues. The segment at 1-48 (MADTQTQVAPTPTMRMATAEDLPLPPPPALEDLPLPPPKESFSKFHQQ) is disordered. The segment at 1 to 54 (MADTQTQVAPTPTMRMATAEDLPLPPPPALEDLPLPPPKESFSKFHQQRQASEL) is interaction with VASP. Positions 23 to 39 (PLPPPPALEDLPLPPPK) are enriched in pro residues. Xin repeat units follow at residues 89 to 104 (GDVQ…WRLD), 121 to 136 (GDVQ…GSFA), 151 to 166 (GDVR…KPLD), and 186 to 201 (GDVQ…RPLD). A disordered region spans residues 132–151 (EGSFANSTDQEPTRPQPGGG). Phosphoserine occurs at positions 205, 208, and 213. Xin repeat units follow at residues 226–241 (GDVK…EPLC) and 264–279 (NAVR…RPLD). Ser295 bears the Phosphoserine mark. Residues 302–317 (PDVSATRWIFETQPLD) form a Xin 7 repeat. Position 332 is a phosphoserine (Ser332). Xin repeat units follow at residues 340 to 355 (PDVQ…RALD) and 376 to 391 (GDVR…KPLD). Positions 406 to 432 (DPQDGEGHLSSDSSSALPFSQSAPQRD) are disordered. The segment covering 415–429 (SSDSSSALPFSQSAP) has biased composition (low complexity). One copy of the Xin 10 repeat lies at 436-451 (GDVKTFKNLFETLPLD). Residues 455-479 (QGEVLAHGSPSREEGTDSAGQAQGI) form a disordered region. 2 Xin repeats span residues 507–522 (GDVQ…QPLD) and 545–560 (GDVG…QPLE). The interval 531–632 (IDVVRGITRQ…AQSCTWMFKP (102 aa)) is interaction with CTNNB1. Residues 564 to 577 (QREQQERQKEEGKS) are compositionally biased toward basic and acidic residues. A disordered region spans residues 564–591 (QREQQERQKEEGKSQGDPQPEAPPKGDV). Xin repeat units lie at residues 589–604 (GDVQ…CPMS), 621–636 (AEAQ…QPVD), 654–669 (GERQ…EPLQ), 691–706 (GQVS…LEAG), and 723–738 (GSVH…CPMG). Disordered regions lie at residues 943 to 999 (SLRW…QAIG), 1063 to 1205 (AEAQ…MAWG), 1238 to 1277 (SGPQ…HRAE), 1289 to 1471 (DPLL…QKEL), and 1561 to 1696 (MSSL…DVSV). 2 stretches are compositionally biased toward polar residues: residues 1064 to 1073 (EAQSLHQQVL) and 1080 to 1089 (PTPTATSNPI). A compositionally biased stretch (polar residues) spans 1294–1311 (SHSSPAGQRTPGGSQTKT). The segment covering 1357-1368 (GQREHQRGERDT) has biased composition (basic and acidic residues). A compositionally biased stretch (polar residues) spans 1393-1424 (GHSQPSLQHGLSTTAPRPTKNQATGSNAQSSE). Positions 1462-1490 (DSLQRNQKELQGLLNQVQALEKEAASSVD) form a coiled coil. Composition is skewed to polar residues over residues 1588–1600 (VTVS…SGSG) and 1663–1679 (SRDS…QSAT). Positions 1685 to 1843 (TPSFKGNPDV…SCSYSQPAAQ (159 aa)) are interaction with FLNC.

The protein belongs to the Xin family. As to quaternary structure, interacts (via N-terminus) with CTTN; the interaction promotes CTTN localization to intercalated disks in cardiomyocytes. Interacts with CTNNB1. Interacts with FLNC and VASP. Interacts with F-actin. In terms of tissue distribution, expressed in skeletal muscle at areas of Z-disk disruption in a longitudinal pattern spanning one or more sarcomeres (at protein level). Expressed in the heart (at protein level). As to expression, expressed in the heart.

It is found in the cell junction. The protein localises to the adherens junction. It localises to the desmosome. Protects actin filaments from depolymerization. Required for correct cardiac intercalated disk ultrastructure via maintenance of cell-cell adhesion stability, and as a result maintains cardiac organ morphology, conductance and heart beat rhythm. Required for development of normal skeletal muscle morphology and muscle fiber type composition. Plays a role in regulating muscle satellite cell activation and survival, as a result promotes muscle fiber recovery from injury and fatigue. The protein is Xin actin-binding repeat-containing protein 1 of Homo sapiens (Human).